The chain runs to 348 residues: D-alanine--D-alanine ligase (348 aa).

Residues 132–334 (KRVLESIGIP…YPDLIEELVT (203 aa)) form the ATP-grasp domain. 162–217 (LARLTFPIFVKPANMGSSVGISKAQTKVELRKAIQLALTYDSRVLIEQGVVAREIE) is an ATP binding site. Residues D288, E301, and N303 each coordinate Mg(2+).

The protein belongs to the D-alanine--D-alanine ligase family. Mg(2+) serves as cofactor. The cofactor is Mn(2+).

The protein resides in the cytoplasm. The enzyme catalyses 2 D-alanine + ATP = D-alanyl-D-alanine + ADP + phosphate + H(+). The protein operates within cell wall biogenesis; peptidoglycan biosynthesis. Functionally, cell wall formation. The protein is D-alanine--D-alanine ligase of Streptococcus pyogenes serotype M12 (strain MGAS2096).